Consider the following 652-residue polypeptide: Probable serine/threonine-protein kinase mkcD (652 aa).

3 disordered regions span residues 1-47 (MNNI…RKNK), 163-198 (NPIDENDKINSKSINDGDDNGGGSGGGGDNSPLTNV), and 257-289 (QQKLKQEQQQEQQQQQEDEPNKSPVSTSSTLSP). Over residues 182 to 191 (NGGGSGGGGD) the composition is skewed to gly residues. Positions 231–275 (KNNQNLHHKQQQLQQLQQLKQQHLQQQQKLKQEQQQEQQQQQEDE) form a coiled coil. Residues 257-271 (QQKLKQEQQQEQQQQ) show a composition bias toward low complexity. Over residues 279 to 289 (SPVSTSSTLSP) the composition is skewed to polar residues. A Protein kinase domain is found at 369–626 (FKNLDFEARG…SSQLLQHPFL (258 aa)). ATP-binding positions include 375 to 383 (EARGGFGSV) and lysine 403. The Proton acceptor role is filled by aspartate 494.

This sequence belongs to the protein kinase superfamily. STE Ser/Thr protein kinase family. STE20 subfamily. Mg(2+) is required as a cofactor.

The enzyme catalyses L-seryl-[protein] + ATP = O-phospho-L-seryl-[protein] + ADP + H(+). The catalysed reaction is L-threonyl-[protein] + ATP = O-phospho-L-threonyl-[protein] + ADP + H(+). The sequence is that of Probable serine/threonine-protein kinase mkcD from Dictyostelium discoideum (Social amoeba).